We begin with the raw amino-acid sequence, 388 residues long: MRYLTSGESHGPQLTVIVEGIPANLEIKVEDINKEMFKRQGGYGRGRRMQIEKDTVEIVSGVRNGYTLGSPITMVVTNDDFTHWRKIMGAAPISEEERENMKRTITKPRPGHADLVGGMKYNHRDLRNVLERSSARETAARVAVGALCKVLLQQLDIDIYSRVVEIGGIKDKDFYDSKTFKANLDRNDVRVIDDSIAQAMRDKIDEAKNDGDSIGGVVQVVVENMPVGVGSYVHYDRKLDGRIAQGVVSINAFKGVSFGEGFKAAEKPGSEIQDEILYNTELGYYRGSNHLGGLEGGMSNGMPIIVNGVMKPIPTLYKPLNSVDINTKEDFKATIERSDSCAVPAASIVCEHVVAFEIAKALLEEFQSNHIEQLKQQIIERRQLNIEF.

Residues arginine 39 and arginine 45 each contribute to the NADP(+) site. FMN-binding positions include arginine 132–serine 134, asparagine 251–alanine 252, glycine 296, lysine 311–threonine 315, and arginine 337.

This sequence belongs to the chorismate synthase family. In terms of assembly, homotetramer. Requires FMNH2 as cofactor.

It catalyses the reaction 5-O-(1-carboxyvinyl)-3-phosphoshikimate = chorismate + phosphate. It participates in metabolic intermediate biosynthesis; chorismate biosynthesis; chorismate from D-erythrose 4-phosphate and phosphoenolpyruvate: step 7/7. Functionally, catalyzes the anti-1,4-elimination of the C-3 phosphate and the C-6 proR hydrogen from 5-enolpyruvylshikimate-3-phosphate (EPSP) to yield chorismate, which is the branch point compound that serves as the starting substrate for the three terminal pathways of aromatic amino acid biosynthesis. This reaction introduces a second double bond into the aromatic ring system. The polypeptide is Chorismate synthase (Staphylococcus aureus (strain MW2)).